Here is a 350-residue protein sequence, read N- to C-terminus: Core protein VP7 (350 aa).

Asn45 carries an N-linked (GlcNAc...) asparagine; by host glycan.

The protein belongs to the orbivirus VP7 family. As to quaternary structure, homotrimer.

Its subcellular location is the virion. Its function is as follows. Major structural core protein; binds to structural protein VP3. Constitutes the surface of the AHSV core. The chain is Core protein VP7 (Segment-7) from African horse sickness virus (AHSV).